Reading from the N-terminus, the 382-residue chain is Homoserine O-acetyltransferase (382 aa).

Residues 50–360 (NAVLICHALT…DKGHDAFLLD (311 aa)) form the AB hydrolase-1 domain. Serine 155 (nucleophile) is an active-site residue. Arginine 225 serves as a coordination point for substrate. Catalysis depends on residues aspartate 321 and histidine 354. Aspartate 355 lines the substrate pocket.

Belongs to the AB hydrolase superfamily. MetX family. In terms of assembly, homodimer.

It localises to the cytoplasm. It catalyses the reaction L-homoserine + acetyl-CoA = O-acetyl-L-homoserine + CoA. The protein operates within amino-acid biosynthesis; L-methionine biosynthesis via de novo pathway; O-acetyl-L-homoserine from L-homoserine: step 1/1. Its function is as follows. Transfers an acetyl group from acetyl-CoA to L-homoserine, forming acetyl-L-homoserine. The protein is Homoserine O-acetyltransferase of Caulobacter vibrioides (strain ATCC 19089 / CIP 103742 / CB 15) (Caulobacter crescentus).